A 191-amino-acid chain; its full sequence is Neuronal calcium sensor 1 (191 aa).

The N-myristoyl glycine moiety is linked to residue glycine 2. EF-hand domains follow at residues 24-59, 60-95, 96-131, and 144-179; these read ESEI…FPFG, DPSK…TSRG, TVEE…IYRM, and TPEK…DPTI. 14 residues coordinate Ca(2+): aspartate 73, asparagine 75, aspartate 77, glutamate 84, aspartate 109, aspartate 111, aspartate 113, tyrosine 115, glutamate 120, aspartate 157, asparagine 159, aspartate 161, glutamine 163, and glutamate 168.

The protein belongs to the recoverin family.

Its subcellular location is the perikaryon. It localises to the cell projection. The protein localises to the growth cone. In terms of biological role, neuronal calcium sensor, regulator of G protein-coupled receptor phosphorylation in a calcium dependent manner. Regulates neurite extension and branching by activity-dependent Ca(2+) influx in growth cones. The polypeptide is Neuronal calcium sensor 1 (Lymnaea stagnalis (Great pond snail)).